Here is a 232-residue protein sequence, read N- to C-terminus: 5'-methylthioadenosine/S-adenosylhomocysteine nucleosidase (232 aa).

Glu-12 (proton acceptor) is an active-site residue. Substrate-binding positions include Gly-78, Val-153, and 174-175; that span reads ME. The Proton donor role is filled by Asp-198.

This sequence belongs to the PNP/UDP phosphorylase family. MtnN subfamily.

The catalysed reaction is S-adenosyl-L-homocysteine + H2O = S-(5-deoxy-D-ribos-5-yl)-L-homocysteine + adenine. It carries out the reaction S-methyl-5'-thioadenosine + H2O = 5-(methylsulfanyl)-D-ribose + adenine. It catalyses the reaction 5'-deoxyadenosine + H2O = 5-deoxy-D-ribose + adenine. The protein operates within amino-acid biosynthesis; L-methionine biosynthesis via salvage pathway; S-methyl-5-thio-alpha-D-ribose 1-phosphate from S-methyl-5'-thioadenosine (hydrolase route): step 1/2. Functionally, catalyzes the irreversible cleavage of the glycosidic bond in both 5'-methylthioadenosine (MTA) and S-adenosylhomocysteine (SAH/AdoHcy) to adenine and the corresponding thioribose, 5'-methylthioribose and S-ribosylhomocysteine, respectively. Also cleaves 5'-deoxyadenosine, a toxic by-product of radical S-adenosylmethionine (SAM) enzymes, into 5-deoxyribose and adenine. The sequence is that of 5'-methylthioadenosine/S-adenosylhomocysteine nucleosidase from Photobacterium profundum (strain SS9).